Reading from the N-terminus, the 366-residue chain is 3-dehydroquinate synthase (366 aa).

NAD(+) contacts are provided by residues Gly-107 to Asp-111, Thr-131 to Ser-132, Lys-144, and Lys-153. Zn(2+) is bound by residues Glu-186, His-251, and His-268.

This sequence belongs to the sugar phosphate cyclases superfamily. Dehydroquinate synthase family. Requires Co(2+) as cofactor. Zn(2+) serves as cofactor. The cofactor is NAD(+).

Its subcellular location is the cytoplasm. The enzyme catalyses 7-phospho-2-dehydro-3-deoxy-D-arabino-heptonate = 3-dehydroquinate + phosphate. It participates in metabolic intermediate biosynthesis; chorismate biosynthesis; chorismate from D-erythrose 4-phosphate and phosphoenolpyruvate: step 2/7. Its function is as follows. Catalyzes the conversion of 3-deoxy-D-arabino-heptulosonate 7-phosphate (DAHP) to dehydroquinate (DHQ). In Rippkaea orientalis (strain PCC 8801 / RF-1) (Cyanothece sp. (strain PCC 8801)), this protein is 3-dehydroquinate synthase.